Here is a 950-residue protein sequence, read N- to C-terminus: Protocadherin alpha-13 (950 aa).

A signal peptide spans 1–29 (MLSSWQGGPRPRQLLLWLLILAAWETGSG). The Extracellular segment spans residues 30-697 (QLHYSVPEEA…GPEAALVDVN (668 aa)). Cadherin domains lie at 34-133 (SVPE…PPIF), 134-242 (PESK…APEF), 243-350 (YQSV…APEV), 351-455 (TITS…APAF), 456-565 (AQPE…APAL), and 581-678 (MPRS…APQA). N-linked (GlcNAc...) asparagine glycans are attached at residues N257 and N265. N-linked (GlcNAc...) asparagine glycosylation occurs at N548. Residues 698 to 718 (VYLIIAICAVSSLLVLTLLLY) form a helical membrane-spanning segment. Over 719–950 (TALRCSAPPT…GNSTTDNSDQ (232 aa)) the chain is Cytoplasmic. PXXP repeat units follow at residues 734 to 737 (PGKP), 774 to 777 (PSLP), 799 to 802 (PRQP), 832 to 835 (PGGP), 873 to 876 (PGNP), and 891 to 894 (PGSP). A 6 X 4 AA repeats of P-X-X-P region spans residues 734–894 (PGKPTLVCSS…PDKFIIPGSP (161 aa)). Disordered regions lie at residues 774-808 (PSLP…DWRY) and 827-950 (ILRA…NSDQ). A compositionally biased stretch (basic and acidic residues) spans 787–800 (GQREEDSEGLKEPR). Basic and acidic residues predominate over residues 909–923 (DKSDFITFGKKEETK).

The protein resides in the cell membrane. In terms of biological role, potential calcium-dependent cell-adhesion protein. May be involved in the establishment and maintenance of specific neuronal connections in the brain. This Pan troglodytes (Chimpanzee) protein is Protocadherin alpha-13 (PCDHA13).